The following is a 497-amino-acid chain: Cytochrome P450 71A12 (497 aa).

A helical membrane pass occupies residues 4–24; the sequence is ILMVSLCLTTLITLFLLKQFL. Cys439 contributes to the heme binding site.

The protein belongs to the cytochrome P450 family. It depends on heme as a cofactor.

Its subcellular location is the membrane. In terms of biological role, converts indole-3-acetaldoxime to indole cyanohydrin. Involved in the biosynthetic pathway to 4-hydroxyindole-3-carbonyl nitrile (4-OH-ICN), a cyanogenic metabolite required for inducible pathogen defense. The polypeptide is Cytochrome P450 71A12 (CYP71A12) (Arabidopsis thaliana (Mouse-ear cress)).